A 1105-amino-acid polypeptide reads, in one-letter code: ATP-dependent DNA helicase MPH1 (1105 aa).

The region spanning isoleucine 94 to lysine 261 is the Helicase ATP-binding domain. Leucine 107–threonine 114 provides a ligand contact to ATP. Positions aspartate 209–histidine 212 match the DEAH box motif. The Helicase C-terminal domain maps to serine 468–isoleucine 641. 5 disordered regions span residues glutamate 493–lysine 534, lysine 684–phenylalanine 708, isoleucine 758–glycine 824, leucine 850–proline 880, and valine 918–glycine 953. The segment covering lysine 499–lysine 511 has biased composition (basic residues). Basic and acidic residues predominate over residues threonine 518–glutamine 532. The segment covering lysine 684–glutamate 705 has biased composition (basic residues). The span at proline 764–threonine 787 shows a compositional bias: basic and acidic residues. Positions glutamate 788–glutamate 799 are enriched in low complexity. The span at aspartate 927–threonine 943 shows a compositional bias: polar residues. Residues serine 944–glycine 953 are compositionally biased toward acidic residues.

Belongs to the DEAD box helicase family. DEAH subfamily. FANCM sub-subfamily. In terms of assembly, interacts with the MHF histone-fold complex to form the FANCM-MHF complex.

The protein resides in the nucleus. It catalyses the reaction ATP + H2O = ADP + phosphate + H(+). In terms of biological role, ATP-dependent DNA helicase involved in DNA damage repair by homologous recombination and in genome maintenance. Capable of unwinding D-loops. Plays a role in limiting crossover recombinants during mitotic DNA double-strand break (DSB) repair. Component of a FANCM-MHF complex which promotes gene conversion at blocked replication forks, probably by reversal of the stalled fork. This is ATP-dependent DNA helicase MPH1 from Debaryomyces hansenii (strain ATCC 36239 / CBS 767 / BCRC 21394 / JCM 1990 / NBRC 0083 / IGC 2968) (Yeast).